The primary structure comprises 305 residues: Ubiquinone biosynthesis protein COQ4 homolog, mitochondrial (305 aa).

His-150, Asp-151, His-154, and Glu-166 together coordinate Zn(2+).

This sequence belongs to the COQ4 family. Component of a multi-subunit COQ enzyme complex. It depends on Zn(2+) as a cofactor.

Its subcellular location is the mitochondrion inner membrane. It catalyses the reaction a 4-hydroxy-3-methoxy-5-(all-trans-polyprenyl)benzoate + H(+) = a 2-methoxy-6-(all-trans-polyprenyl)phenol + CO2. It participates in cofactor biosynthesis; ubiquinone biosynthesis. Its function is as follows. Lyase that catalyzes the C1-decarboxylation of 4-hydroxy-3-methoxy-5-(all-trans-polyprenyl)benzoic acid into 2-methoxy-6-(all-trans-polyprenyl)phenol during ubiquinone biosynthesis. The sequence is that of Ubiquinone biosynthesis protein COQ4 homolog, mitochondrial from Cryptosporidium parvum (strain Iowa II).